Reading from the N-terminus, the 101-residue chain is NAD(P)H-quinone oxidoreductase subunit 4L, chloroplastic (101 aa).

Transmembrane regions (helical) follow at residues 2–22 (MTEHVLILSAYLFSIGIYGLI), 32–52 (MCLELILNAVNLNLVTFSDLF), and 61–81 (IFSIFVIAIAAAEAAIGPAIV).

Belongs to the complex I subunit 4L family. In terms of assembly, NDH is composed of at least 16 different subunits, 5 of which are encoded in the nucleus.

It localises to the plastid. It is found in the chloroplast thylakoid membrane. It carries out the reaction a plastoquinone + NADH + (n+1) H(+)(in) = a plastoquinol + NAD(+) + n H(+)(out). The catalysed reaction is a plastoquinone + NADPH + (n+1) H(+)(in) = a plastoquinol + NADP(+) + n H(+)(out). NDH shuttles electrons from NAD(P)H:plastoquinone, via FMN and iron-sulfur (Fe-S) centers, to quinones in the photosynthetic chain and possibly in a chloroplast respiratory chain. The immediate electron acceptor for the enzyme in this species is believed to be plastoquinone. Couples the redox reaction to proton translocation, and thus conserves the redox energy in a proton gradient. In Liriodendron tulipifera (Tuliptree), this protein is NAD(P)H-quinone oxidoreductase subunit 4L, chloroplastic.